We begin with the raw amino-acid sequence, 412 residues long: Serine hydroxymethyltransferase (412 aa).

(6S)-5,6,7,8-tetrahydrofolate is bound by residues Leu-117 and 121–123 (GHL). Lys-226 is modified (N6-(pyridoxal phosphate)lysine). 349–351 (SPF) provides a ligand contact to (6S)-5,6,7,8-tetrahydrofolate.

This sequence belongs to the SHMT family. As to quaternary structure, homodimer. It depends on pyridoxal 5'-phosphate as a cofactor.

It is found in the cytoplasm. It carries out the reaction (6R)-5,10-methylene-5,6,7,8-tetrahydrofolate + glycine + H2O = (6S)-5,6,7,8-tetrahydrofolate + L-serine. The protein operates within one-carbon metabolism; tetrahydrofolate interconversion. It participates in amino-acid biosynthesis; glycine biosynthesis; glycine from L-serine: step 1/1. In terms of biological role, catalyzes the reversible interconversion of serine and glycine with tetrahydrofolate (THF) serving as the one-carbon carrier. This reaction serves as the major source of one-carbon groups required for the biosynthesis of purines, thymidylate, methionine, and other important biomolecules. Also exhibits THF-independent aldolase activity toward beta-hydroxyamino acids, producing glycine and aldehydes, via a retro-aldol mechanism. The sequence is that of Serine hydroxymethyltransferase from Halothermothrix orenii (strain H 168 / OCM 544 / DSM 9562).